The sequence spans 200 residues: DNA-binding protein HupB (200 aa).

The tract at residues 1–90 is bacterial histone-like domain; it reads MNKAELIDVL…PGAQFKAVVA (90 aa). N6-acetyllysine is present on residues Lys3, Lys72, Lys86, Lys103, Lys137, Lys144, and Lys156. The degenerate repeats region stretch occupies residues 101–200; the sequence is AVKRGVATSA…KVTAAKRGRK (100 aa). The segment at 179-200 is disordered; that stretch reads AKKAAVKKAPAKKVTAAKRGRK.

This sequence belongs to the bacterial histone-like protein family. Long actinobacterial subfamily. In terms of assembly, binds to human laminin-2. In terms of processing, may also be methylated and possibly phosphorylated in vivo.

It localises to the cytoplasm. It is found in the nucleoid. The protein localises to the secreted. The protein resides in the cell wall. Its subcellular location is the cell surface. The enzyme catalyses 4 Fe(2+) + O2 + 4 H(+) = 4 Fe(3+) + 2 H2O. A nucleoid-associated protein (NAP) that plays a role in local chromosome architecture and chromosome compactation. Required for biofilm formation, stress survival and possibly in cell wall assembly, probably influences transcription. RNase E and HupB jointly contribute to cellular adaptation to changing growth conditions and survival during antibiotic treatment and in the host. Functionally, binds Fe(3+) but not Fe(2+). Has ferroxidase activity, converts Fe(2+) into Fe(3+) and in the presence of H(2)O(2) prevents the generation of hydroxyl radicals (the Fenton reaction). Protects DNA from damage in the presence of FeSO(4) and H(2)O(2). May function in iron storage. In terms of biological role, may be involved in entry into human Schwann cells. The protein is DNA-binding protein HupB of Mycobacterium leprae (strain TN).